The sequence spans 226 residues: Urease accessory protein UreF (226 aa).

It belongs to the UreF family. As to quaternary structure, ureD, UreF and UreG form a complex that acts as a GTP-hydrolysis-dependent molecular chaperone, activating the urease apoprotein by helping to assemble the nickel containing metallocenter of UreC. The UreE protein probably delivers the nickel.

It localises to the cytoplasm. Required for maturation of urease via the functional incorporation of the urease nickel metallocenter. The sequence is that of Urease accessory protein UreF from Burkholderia lata (strain ATCC 17760 / DSM 23089 / LMG 22485 / NCIMB 9086 / R18194 / 383).